We begin with the raw amino-acid sequence, 213 residues long: 3-isopropylmalate dehydratase small subunit (213 aa).

This sequence belongs to the LeuD family. LeuD type 1 subfamily. Heterodimer of LeuC and LeuD.

It carries out the reaction (2R,3S)-3-isopropylmalate = (2S)-2-isopropylmalate. It functions in the pathway amino-acid biosynthesis; L-leucine biosynthesis; L-leucine from 3-methyl-2-oxobutanoate: step 2/4. Its function is as follows. Catalyzes the isomerization between 2-isopropylmalate and 3-isopropylmalate, via the formation of 2-isopropylmaleate. The protein is 3-isopropylmalate dehydratase small subunit of Aromatoleum aromaticum (strain DSM 19018 / LMG 30748 / EbN1) (Azoarcus sp. (strain EbN1)).